Reading from the N-terminus, the 522-residue chain is Sorting nexin-1 (522 aa).

Disordered stretches follow at residues 1–84 (MASG…QDQE) and 115–142 (SLPP…QEDQ). A phosphoserine mark is found at Ser-32 and Ser-39. Acidic residues predominate over residues 35–45 (EAGDSDTEGED). Phosphothreonine occurs at positions 41 and 48. Polar residues predominate over residues 55–73 (KHQSPKITTSLLPINNGSK). 2 positions are modified to phosphoserine: Ser-58 and Ser-72. The span at 132–142 (EELEEEEQEDQ) shows a compositional bias: acidic residues. The region spanning 143 to 272 (FDLTVGITDP…EFLEKEELPR (130 aa)) is the PX domain. A 1,2-diacyl-sn-glycero-3-phospho-(1D-myo-inositol-3-phosphate) is bound by residues Arg-186, Ser-188, and Lys-214. A Phosphoserine modification is found at Ser-188. Lys-237 is subject to N6-acetyllysine. Arg-238 provides a ligand contact to a 1,2-diacyl-sn-glycero-3-phospho-(1D-myo-inositol-3-phosphate). Residue Ser-280 is modified to Phosphoserine. A membrane-binding amphipathic helix region spans residues 281–298 (GAGLLKMFNKATDAVSKM). Residues 302-522 (MNESDIWFEE…AFLPEAKAIS (221 aa)) form the BAR domain.

It belongs to the sorting nexin family. Predominantly forms heterodimers with BAR domain-containing sorting nexins SNX5, SNX6 and SNX32; can self-associate to form homodimers. The heterodimers are proposed to self-assemble into helical arrays on the membrane to stabilize and expand local membrane curvature underlying endosomal tubule formation. Thought to be a component of the originally described retromer complex (also called SNX-BAR retromer) which is a pentamer containing the heterotrimeric retromer cargo-selective complex (CSC), also described as vacuolar protein sorting subcomplex (VPS) and a heterodimeric membrane-deforming subcomplex formed between SNX1 or SNX2 and SNX5 or SNX6 (also called SNX-BAR subcomplex); the respective CSC and SNX-BAR subcomplexes associate with low affinity. Interacts with SNX5, SNX6, SNX32, VPS26A, VPS29, VPS35, DRD5, DENND5A, KALRN, RHOG (GDP-bound form). The interaction with SNX2 is reported controversially. Interacts with DNAJC13; prevented by presence of HGS. Interacts with HGS.

It is found in the endosome membrane. The protein resides in the golgi apparatus. The protein localises to the trans-Golgi network membrane. Its subcellular location is the early endosome membrane. It localises to the cell projection. It is found in the lamellipodium. Its function is as follows. Involved in several stages of intracellular trafficking. Interacts with membranes containing phosphatidylinositol 3-phosphate (PtdIns(3P)) or phosphatidylinositol 3,5-bisphosphate (PtdIns(3,5)P2). Acts in part as component of the retromer membrane-deforming SNX-BAR subcomplex. The SNX-BAR retromer mediates retrograde transport of cargo proteins from endosomes to the trans-Golgi network (TGN) and is involved in endosome-to-plasma membrane transport for cargo protein recycling. The SNX-BAR subcomplex functions to deform the donor membrane into a tubular profile called endosome-to-TGN transport carrier (ETC). Can sense membrane curvature and has in vitro vesicle-to-membrane remodeling activity. Involved in retrograde endosome-to-TGN transport of lysosomal enzyme receptors (IGF2R, M6PR and SORT1) and Shiginella dysenteria toxin stxB. Plays a role in targeting ligand-activated EGFR to the lysosomes for degradation after endocytosis from the cell surface and release from the Golgi. Involvement in retromer-independent endocytic trafficking of P2RY1 and lysosomal degradation of protease-activated receptor-1/F2R. Promotes KALRN- and RHOG-dependent but retromer-independent membrane remodeling such as lamellipodium formation; the function is dependent on GEF activity of KALRN. Required for endocytosis of DRD5 upon agonist stimulation but not for basal receptor trafficking. This chain is Sorting nexin-1 (SNX1), found in Homo sapiens (Human).